The following is a 444-amino-acid chain: DNA primase DnaG (444 aa).

The Toprim domain occupies 186–260 (DSIIVVEGRN…EVDFVARAPP (75 aa)). Mg(2+) contacts are provided by Glu192, Asp234, and Asp236.

This sequence belongs to the archaeal DnaG primase family. In terms of assembly, forms a ternary complex with MCM helicase and DNA. Component of the archaeal exosome complex. The cofactor is Mg(2+).

The catalysed reaction is ssDNA + n NTP = ssDNA/pppN(pN)n-1 hybrid + (n-1) diphosphate.. Functionally, RNA polymerase that catalyzes the synthesis of short RNA molecules used as primers for DNA polymerase during DNA replication. Also part of the exosome, which is a complex involved in RNA degradation. Acts as a poly(A)-binding protein that enhances the interaction between heteromeric, adenine-rich transcripts and the exosome. This Thermoplasma volcanium (strain ATCC 51530 / DSM 4299 / JCM 9571 / NBRC 15438 / GSS1) protein is DNA primase DnaG.